The primary structure comprises 338 residues: DNA-directed RNA polymerase subunit alpha (338 aa).

The segment at 1–234 is alpha N-terminal domain (alpha-NTD); that stretch reads MIQKNWQELI…DQLNVFVNFE (234 aa). The tract at residues 250 to 338 is alpha C-terminal domain (alpha-CTD); it reads FNPALLKKVD…ELAKRFEEHY (89 aa).

It belongs to the RNA polymerase alpha chain family. In terms of assembly, homodimer. The RNAP catalytic core consists of 2 alpha, 1 beta, 1 beta' and 1 omega subunit. When a sigma factor is associated with the core the holoenzyme is formed, which can initiate transcription.

It carries out the reaction RNA(n) + a ribonucleoside 5'-triphosphate = RNA(n+1) + diphosphate. Functionally, DNA-dependent RNA polymerase catalyzes the transcription of DNA into RNA using the four ribonucleoside triphosphates as substrates. In Beijerinckia indica subsp. indica (strain ATCC 9039 / DSM 1715 / NCIMB 8712), this protein is DNA-directed RNA polymerase subunit alpha.